The sequence spans 299 residues: Elongation factor Ts (299 aa).

Residues 82-85 (TDFV) are involved in Mg(2+) ion dislocation from EF-Tu.

Belongs to the EF-Ts family.

It localises to the cytoplasm. Its function is as follows. Associates with the EF-Tu.GDP complex and induces the exchange of GDP to GTP. It remains bound to the aminoacyl-tRNA.EF-Tu.GTP complex up to the GTP hydrolysis stage on the ribosome. This is Elongation factor Ts from Dechloromonas aromatica (strain RCB).